The sequence spans 670 residues: tRNA 5-methylaminomethyl-2-thiouridine biosynthesis bifunctional protein MnmC (670 aa).

Residues 1-242 are tRNA (mnm(5)s(2)U34)-methyltransferase; the sequence is MTFSVQHAEI…KRECLSGLKI (242 aa). The tract at residues 269 to 670 is FAD-dependent cmnm(5)s(2)U34 oxidoreductase; it reads IGGGIASLCA…KKWLKGSKVE (402 aa).

This sequence in the N-terminal section; belongs to the methyltransferase superfamily. tRNA (mnm(5)s(2)U34)-methyltransferase family. In the C-terminal section; belongs to the DAO family. FAD is required as a cofactor.

It is found in the cytoplasm. It catalyses the reaction 5-aminomethyl-2-thiouridine(34) in tRNA + S-adenosyl-L-methionine = 5-methylaminomethyl-2-thiouridine(34) in tRNA + S-adenosyl-L-homocysteine + H(+). Its function is as follows. Catalyzes the last two steps in the biosynthesis of 5-methylaminomethyl-2-thiouridine (mnm(5)s(2)U) at the wobble position (U34) in tRNA. Catalyzes the FAD-dependent demodification of cmnm(5)s(2)U34 to nm(5)s(2)U34, followed by the transfer of a methyl group from S-adenosyl-L-methionine to nm(5)s(2)U34, to form mnm(5)s(2)U34. The chain is tRNA 5-methylaminomethyl-2-thiouridine biosynthesis bifunctional protein MnmC from Haemophilus influenzae (strain PittGG).